Consider the following 151-residue polypeptide: Large ribosomal subunit protein bL9 (151 aa).

The protein belongs to the bacterial ribosomal protein bL9 family.

In terms of biological role, binds to the 23S rRNA. This chain is Large ribosomal subunit protein bL9, found in Chlorobium phaeovibrioides (strain DSM 265 / 1930) (Prosthecochloris vibrioformis (strain DSM 265)).